The chain runs to 95 residues: Small ribosomal subunit protein uS19 (95 aa).

The protein belongs to the universal ribosomal protein uS19 family.

Its function is as follows. Protein S19 forms a complex with S13 that binds strongly to the 16S ribosomal RNA. In Myxococcus xanthus (strain DK1622), this protein is Small ribosomal subunit protein uS19.